We begin with the raw amino-acid sequence, 223 residues long: Protein UGX2 (223 aa).

Basic residues predominate over residues 78–95 (SNKRAKMKSKTKLTRTAK). Residues 78-117 (SNKRAKMKSKTKLTRTAKQRRESPVCERDESDEDNDSDHY) form a disordered region. Positions 96–105 (QRRESPVCER) are enriched in basic and acidic residues.

The sequence is that of Protein UGX2 (UGX2) from Saccharomyces cerevisiae (strain ATCC 204508 / S288c) (Baker's yeast).